Consider the following 324-residue polypeptide: Quinolinate synthase (324 aa).

Residues H44 and S62 each coordinate iminosuccinate. C107 is a [4Fe-4S] cluster binding site. Iminosuccinate-binding positions include 133-135 (YVN) and S150. C192 is a [4Fe-4S] cluster binding site. Iminosuccinate contacts are provided by residues 218–220 (HPE) and T235. Residue C278 participates in [4Fe-4S] cluster binding.

The protein belongs to the quinolinate synthase family. Type 2 subfamily. It depends on [4Fe-4S] cluster as a cofactor.

It localises to the cytoplasm. It catalyses the reaction iminosuccinate + dihydroxyacetone phosphate = quinolinate + phosphate + 2 H2O + H(+). It functions in the pathway cofactor biosynthesis; NAD(+) biosynthesis; quinolinate from iminoaspartate: step 1/1. Functionally, catalyzes the condensation of iminoaspartate with dihydroxyacetone phosphate to form quinolinate. This is Quinolinate synthase from Leptospira interrogans serogroup Icterohaemorrhagiae serovar copenhageni (strain Fiocruz L1-130).